A 380-amino-acid chain; its full sequence is Probable protein phosphatase 2C 34 (380 aa).

Residues 32–335 (AAGEFSMAAA…DDISVIVVYL (304 aa)) enclose the PPM-type phosphatase domain. 4 residues coordinate Mn(2+): D66, G67, D267, and D326.

Belongs to the PP2C family. It depends on Mg(2+) as a cofactor. The cofactor is Mn(2+).

The catalysed reaction is O-phospho-L-seryl-[protein] + H2O = L-seryl-[protein] + phosphate. It carries out the reaction O-phospho-L-threonyl-[protein] + H2O = L-threonyl-[protein] + phosphate. The chain is Probable protein phosphatase 2C 34 (BIPP2C2) from Oryza sativa subsp. indica (Rice).